The sequence spans 334 residues: Cytoskeleton protein RodZ (334 aa).

Residues 1–111 lie on the Cytoplasmic side of the membrane; sequence MNTEATHDQN…LGKRRKKRDG (111 aa). The 53-residue stretch at 19 to 71 folds into the HTH cro/C1-type domain; it reads LRNAREQLGLSQQAVAERLCLKVSTVRDIEEDKAPSDLASTFLRGYIRSYARL. The H-T-H motif DNA-binding region spans 30 to 49; sequence QQAVAERLCLKVSTVRDIEE. A helical; Signal-anchor for type II membrane protein membrane pass occupies residues 112-132; it reads WLMSFTWLVLFVVVGLTGAWW. The Periplasmic segment spans residues 133–334; that stretch reads WQNHKAQQEE…TLNAEPTPAQ (202 aa). A disordered region spans residues 155–241; it reads NADKDSGQSV…PSALPTSQAG (87 aa). Low complexity-rich tracts occupy residues 170–211 and 219–241; these read AATS…TVVA and TAAT…SQAG.

It belongs to the RodZ family.

The protein localises to the cell inner membrane. Functionally, cytoskeletal protein that is involved in cell-shape control through regulation of the length of the long axis. The chain is Cytoskeleton protein RodZ from Salmonella agona (strain SL483).